The chain runs to 29 residues: Cytochrome b6-f complex subunit 8 (29 aa).

Residues 3–23 (ILTLGWVGLLGLFTYSIAMVV) form a helical membrane-spanning segment.

It belongs to the PetN family. The 4 large subunits of the cytochrome b6-f complex are cytochrome b6, subunit IV (17 kDa polypeptide, PetD), cytochrome f and the Rieske protein, while the 4 small subunits are PetG, PetL, PetM and PetN. The complex functions as a dimer.

It is found in the cellular thylakoid membrane. Component of the cytochrome b6-f complex, which mediates electron transfer between photosystem II (PSII) and photosystem I (PSI), cyclic electron flow around PSI, and state transitions. This Cyanothece sp. (strain PCC 7425 / ATCC 29141) protein is Cytochrome b6-f complex subunit 8.